The chain runs to 625 residues: TRAF3-interacting protein 1 (625 aa).

An abolishes microtubules binding when missing region spans residues 1-322 (MNAAVVRRTQ…RKLSDGSFKD (322 aa)). Positions 130–439 (AGDKGDSRGR…DSQNSDNEDD (310 aa)) are disordered. Positions 141-152 (QRTSKAQEPNNK) are enriched in polar residues. A compositionally biased stretch (basic and acidic residues) spans 153–327 (SGKEEESRIH…GSFKDVKAEM (175 aa)). Residues 229 to 625 (RAKDRDRNNR…VHSINLSSRR (397 aa)) are DISC1-interaction domain. Phosphoserine is present on residues serine 316 and serine 409. Over residues 420 to 434 (SGKTVSSVIIDSQNS) the composition is skewed to polar residues. Positions 472-600 (GLVKKILETK…IRDQQDKICA (129 aa)) form a coiled coil.

It belongs to the TRAF3IP1 family. In terms of assembly, interacts with IL13RA1. Binds to microtubules, TRAF3 and DISC1. Component of the IFT complex B, at least composed of IFT20, IFT22, IFT25, IFT27, IFT46, IFT52, TRAF3IP1/IFT54, IFT57, IFT74, IFT80, IFT81, and IFT88. Interacts with IFT88. Interacts with MAP4.

The protein localises to the cytoplasm. Its subcellular location is the cytoskeleton. It is found in the cell projection. The protein resides in the cilium. It localises to the cilium axoneme. The protein localises to the cilium basal body. Its function is as follows. Plays an inhibitory role on IL13 signaling by binding to IL13RA1. Involved in suppression of IL13-induced STAT6 phosphorylation, transcriptional activity and DNA-binding. Recruits TRAF3 and DISC1 to the microtubules. Involved in epithelial morphogenesis and in the regulation of microtubule cytoskeleton organization. Is a negative regulator of microtubule stability, acting through the control of MAP4 levels. Involved in ciliogenesis. This Mus musculus (Mouse) protein is TRAF3-interacting protein 1 (Traf3ip1).